Reading from the N-terminus, the 620-residue chain is Transcription factor kayak (620 aa).

Disordered regions lie at residues 1–36 (MKVKVERTTITKKTTTTKPKPDEEDNNDDNSSSNGV) and 184–288 (SDTD…EKRR). Polar residues predominate over residues 184-194 (SDTDDSNASWN). Low complexity-rich tracts occupy residues 201–233 (GDTTDTSSGATDSTSYQNNSMLGNGSNGSGANN) and 249–266 (ANNNSNTNTSNSATPAAR). The bZIP domain occupies 284–347 (EEKRRIRRER…NQLKYVIEAH (64 aa)). The interval 286 to 305 (KRRIRRERNKAAAARCRKRR) is basic motif. Residues 312-340 (LTEEVDALVKKGDTLKAEITTLTELRNQL) are leucine-zipper. Residues 375–414 (STGGSSCGSVHSNHSHNNNNNNNNSNDSSSGTITGFDATL) form a disordered region. The segment covering 377 to 405 (GGSSCGSVHSNHSHNNNNNNNNSNDSSSG) has biased composition (low complexity). Ser-422 carries the phosphoserine modification. Disordered regions lie at residues 447–466 (GLDSESSSLDQDGPPPAKRA) and 590–620 (SGPLIPNCSSQNKHPLELPTPTTEPSKLCPL).

The protein belongs to the bZIP family. Fos subfamily. Homodimer. Heterodimer with Jra. The kay-Jra heterodimer binds more stably to the AP-1 site than either of the two proteins alone.

The protein resides in the nucleus. Functionally, developmentally regulated transcription factor AP-1 binds and recognizes the enhancer DNA sequence: 5'-TGA[CG]TCA-3'. May play a role in the function or determination of a particular subset of cells in the developing embryo. It is able to carry out its function either independently of or in conjunction with Jra. The protein is Transcription factor kayak of Drosophila willistoni (Fruit fly).